Reading from the N-terminus, the 1415-residue chain is DNA-directed RNA polymerase subunit beta' (1415 aa).

The Zn(2+) site is built by C69, C71, C84, and C87. Residues D461, D463, and D465 each coordinate Mg(2+). The Zn(2+) site is built by C805, C879, C886, and C889.

Belongs to the RNA polymerase beta' chain family. As to quaternary structure, the RNAP catalytic core consists of 2 alpha, 1 beta, 1 beta' and 1 omega subunit. When a sigma factor is associated with the core the holoenzyme is formed, which can initiate transcription. The cofactor is Mg(2+). Zn(2+) is required as a cofactor.

The enzyme catalyses RNA(n) + a ribonucleoside 5'-triphosphate = RNA(n+1) + diphosphate. DNA-dependent RNA polymerase catalyzes the transcription of DNA into RNA using the four ribonucleoside triphosphates as substrates. This chain is DNA-directed RNA polymerase subunit beta', found in Anaplasma marginale (strain Florida).